The sequence spans 293 residues: Heterogeneous nuclear ribonucleoprotein D-like-A (293 aa).

Residues 1–21 (MAGFGAAPDFNEGSKINASKN) form a disordered region. RRM domains follow at residues 26-108 (GKMF…KGKE) and 111-188 (KKVF…AAQP). Disordered stretches follow at residues 193–224 (RQQQQKQQRGGRGAVTGRGGTRGRGRGQGWNQ) and 274–293 (QSTYGKARGGGNHQNNYQPY). Residues 202 to 222 (GGRGAVTGRGGTRGRGRGQGW) are compositionally biased toward gly residues.

Its subcellular location is the nucleus. The protein resides in the cytoplasm. In terms of biological role, acts as a transcriptional regulator. Binds DNA and RNA. In Xenopus laevis (African clawed frog), this protein is Heterogeneous nuclear ribonucleoprotein D-like-A (hnrnpdl-a).